Here is a 438-residue protein sequence, read N- to C-terminus: Tol-Pal system protein TolB (438 aa).

The signal sequence occupies residues 1–35 (MITMKNILKLRATGLLLLLLLMISVLGNGIGQAMA).

This sequence belongs to the TolB family. In terms of assembly, the Tol-Pal system is composed of five core proteins: the inner membrane proteins TolA, TolQ and TolR, the periplasmic protein TolB and the outer membrane protein Pal. They form a network linking the inner and outer membranes and the peptidoglycan layer.

It localises to the periplasm. Its function is as follows. Part of the Tol-Pal system, which plays a role in outer membrane invagination during cell division and is important for maintaining outer membrane integrity. This Desulfotalea psychrophila (strain LSv54 / DSM 12343) protein is Tol-Pal system protein TolB.